The primary structure comprises 119 residues: Large ribosomal subunit protein bL20 (119 aa).

The protein belongs to the bacterial ribosomal protein bL20 family.

Functionally, binds directly to 23S ribosomal RNA and is necessary for the in vitro assembly process of the 50S ribosomal subunit. It is not involved in the protein synthesizing functions of that subunit. The protein is Large ribosomal subunit protein bL20 of Acinetobacter baylyi (strain ATCC 33305 / BD413 / ADP1).